The following is a 309-amino-acid chain: Ferrochelatase (309 aa).

Fe cation is bound by residues H187 and E265.

This sequence belongs to the ferrochelatase family.

It localises to the cytoplasm. The enzyme catalyses heme b + 2 H(+) = protoporphyrin IX + Fe(2+). The protein operates within porphyrin-containing compound metabolism; protoheme biosynthesis; protoheme from protoporphyrin-IX: step 1/1. In terms of biological role, catalyzes the ferrous insertion into protoporphyrin IX. In Nitratiruptor sp. (strain SB155-2), this protein is Ferrochelatase.